The sequence spans 347 residues: Protein RecA (347 aa).

Residue 65–72 (GPESSGKT) participates in ATP binding.

It belongs to the RecA family.

It localises to the cytoplasm. Its function is as follows. Can catalyze the hydrolysis of ATP in the presence of single-stranded DNA, the ATP-dependent uptake of single-stranded DNA by duplex DNA, and the ATP-dependent hybridization of homologous single-stranded DNAs. It interacts with LexA causing its activation and leading to its autocatalytic cleavage. This chain is Protein RecA, found in Marinobacter nauticus (strain ATCC 700491 / DSM 11845 / VT8) (Marinobacter aquaeolei).